Consider the following 76-residue polypeptide: Defensin-like protein 125 (76 aa).

A signal peptide spans 1-25 (MTKAITLAIFMVVLVLGMVTKETQG). Disulfide bonds link cysteine 30-cysteine 74, cysteine 41-cysteine 60, cysteine 46-cysteine 68, and cysteine 50-cysteine 70.

This sequence belongs to the DEFL family.

The protein resides in the secreted. The polypeptide is Defensin-like protein 125 (LCR54) (Arabidopsis thaliana (Mouse-ear cress)).